We begin with the raw amino-acid sequence, 1045 residues long: Mitotic deacetylase-associated SANT domain protein (1045 aa).

Residue M1 is modified to N-acetylmethionine. Disordered stretches follow at residues 1–68 (MNLQ…PPPS) and 99–159 (NSVM…PTYY). The segment covering 132–146 (STWNCHSLSLYSATK) has biased composition (polar residues). A Glycyl lysine isopeptide (Lys-Gly) (interchain with G-Cter in SUMO2) cross-link involves residue K166. An Asymmetric dimethylarginine modification is found at R193. 5 disordered regions span residues 228–264 (QVFR…QQAA), 276–305 (SMPQ…AHHS), 330–349 (APQP…SRRL), 378–397 (HHWP…HPEA), and 410–441 (LPDG…STGD). Positions 240 to 264 (VAAFPPQKQQQQQQPQQQQQQQQAA) are enriched in low complexity. The segment covering 412–425 (DGERLAPNGREREA) has biased composition (basic and acidic residues). Residue R447 is modified to Omega-N-methylarginine. At S461 the chain carries Phosphoserine. The interval 543–563 (QAGGLDEDGKGPEQNPAEHKP) is disordered. A compositionally biased stretch (basic and acidic residues) spans 549–563 (EDGKGPEQNPAEHKP). K590 is covalently cross-linked (Glycyl lysine isopeptide (Lys-Gly) (interchain with G-Cter in SUMO1); alternate). Residue K590 forms a Glycyl lysine isopeptide (Lys-Gly) (interchain with G-Cter in SUMO2); alternate linkage. The residue at position 655 (T655) is a Phosphothreonine. Phosphoserine is present on S661. The residue at position 704 (T704) is a Phosphothreonine. S709 is modified (phosphoserine). T715 is subject to Phosphothreonine. The 93-residue stretch at 721-813 (PRINVGSRFQ…ETLNKLLLKK (93 aa)) folds into the ELM2 domain. The SANT domain maps to 828-879 (TGSDQWKMAERKLFNKGIAIYKKDFFLVQKLIQTKTVAQCVEFYYTYKKQVK). The disordered stretch occupies residues 887–1045 (TFGDVDTSDE…NTFPCKKCGR (159 aa)). Composition is skewed to basic and acidic residues over residues 894–909 (SDEK…DIKT) and 919–942 (PRRE…RKEG). At S923 the chain carries Phosphoserine. Residues 943–957 (EEEVPEIQEKEEQEE) are compositionally biased toward acidic residues. The segment covering 970–980 (ATQTLQANESA) has biased composition (polar residues).

In terms of assembly, interacts with DNTTIP1. Identified in a histone deacetylase complex that contains DNTTIP1, HDAC1 and MIDEAS; this complex assembles into a tetramer that contains four copies of each protein chain.

It is found in the nucleus. The protein is Mitotic deacetylase-associated SANT domain protein of Homo sapiens (Human).